The primary structure comprises 225 residues: Putative membrane protease YugP (225 aa).

H95 lines the Zn(2+) pocket. E96 is an active-site residue. Zn(2+)-binding residues include H99 and H103. 3 consecutive transmembrane segments (helical) span residues 116–138 (IFPV…MLLG), 140–162 (LNLI…ITLP), and 192–212 (VLSA…FELL).

It localises to the cell membrane. This chain is Putative membrane protease YugP (yugP), found in Bacillus subtilis (strain 168).